The primary structure comprises 161 residues: MSYTVIYAGTFDPITNGHLDIITRATKLFAKVIVAVAQNPTKQPLFSLSERTALVAQSCSHLTNVEAVSFSGLLADFARQHHAKALIRGIRGSDDIEYEIQLSQLNNKLADGLETVFLPPAVEWRYLSSTMIREIYYHQGQVNAFVPTAVVQALQNRKNNE.

Thr10 is a binding site for substrate. ATP contacts are provided by residues 10–11 (TF) and His18. Substrate is bound by residues Lys42, Leu74, and Arg88. Residues 89-91 (GIR), Glu99, and 124-130 (WRYLSST) contribute to the ATP site.

It belongs to the bacterial CoaD family. Homohexamer. It depends on Mg(2+) as a cofactor.

Its subcellular location is the cytoplasm. The enzyme catalyses (R)-4'-phosphopantetheine + ATP + H(+) = 3'-dephospho-CoA + diphosphate. Its pathway is cofactor biosynthesis; coenzyme A biosynthesis; CoA from (R)-pantothenate: step 4/5. Reversibly transfers an adenylyl group from ATP to 4'-phosphopantetheine, yielding dephospho-CoA (dPCoA) and pyrophosphate. The chain is Phosphopantetheine adenylyltransferase from Haemophilus ducreyi (strain 35000HP / ATCC 700724).